The following is a 236-amino-acid chain: RNA-binding protein 24 (236 aa).

The RRM domain occupies Thr11–Leu88. The segment at Gln175–Gln199 is necessary for interaction with EIF4E.

Interacts with EIF4E; this interaction prevents EIF4E from binding to p53/TP53 mRNA and inhibits the assembly of translation initiation complex. As to quaternary structure, (Microbial infection) Interacts with HCV mature core protein; this interaction, which enhances the interaction of Core with 5'-UTR may favor viral replication over translation. In terms of assembly, (Microbial infection) Interacts with HCV Serine protease/helicase NS3. In terms of tissue distribution, expressed in fetal and adult heart and skeletal muscles.

Its subcellular location is the nucleus. It localises to the cytoplasm. Functionally, multifunctional RNA-binding protein involved in the regulation of pre-mRNA splicing, mRNA stability and mRNA translation important for cell fate decision and differentiation. Plays a major role in pre-mRNA alternative splicing regulation. Mediates preferentially muscle-specific exon inclusion in numerous mRNAs important for striated cardiac and skeletal muscle cell differentiation. Binds to intronic splicing enhancer (ISE) composed of stretches of GU-rich motifs localized in flanking intron of exon that will be included by alternative splicing. Involved in embryonic stem cell (ESC) transition to cardiac cell differentiation by promoting pre-mRNA alternative splicing events of several pluripotency and/or differentiation genes. Plays a role in the regulation of mRNA stability. Binds to 3'-untranslated region (UTR) AU-rich elements in target transcripts, such as CDKN1A and MYOG, leading to maintain their stabilities. Involved in myogenic differentiation by regulating MYOG levels. Binds to multiple regions in the mRNA 3'-UTR of TP63 isoform 2, hence inducing its destabilization. Also promotes the destabilization of the CHRM2 mRNA via its binding to a region in the coding sequence. Plays a role in the regulation of mRNA translation. Mediates repression of p53/TP53 mRNA translation through its binding to U-rich element in the 3'-UTR, hence preventing EIF4E from binding to p53/TP53 mRNA and translation initiation. Binds to a huge amount of mRNAs. Required for embryonic heart development, sarcomer and M-band formation in striated muscles. Together with RBM20, promotes the expression of short isoforms of PDLIM5/ENH in cardiomyocytes. (Microbial infection) Promotes hepatitis C virus (HCV) replication over translation through the inhibition of viral protein expression. Decreases viral translation by linking viral 5'- and 3'-UTRs, blocking 80S ribosome assembly on the viral IRES and enhancing the interaction of the mature core protein and 5'-UTR. This Homo sapiens (Human) protein is RNA-binding protein 24.